The chain runs to 549 residues: Cation/acetate symporter ActP (549 aa).

The next 13 helical transmembrane spans lie at 33 to 53 (WQAI…TYWA), 77 to 97 (LAIA…ALVF), 103 to 123 (GLIY…LIAE), 148 to 168 (ILSA…QMVG), 183 to 203 (IAVV…GMLA), 206 to 226 (WVQI…AFMV), 262 to 282 (ISAL…PHIL), 303 to 323 (GFMG…IMLV), 355 to 375 (LFLG…VAGL), 404 to 424 (VSKI…VLFE), 428 to 448 (IAFM…PIIL), 464 to 484 (GGWL…TIWV), and 493 to 513 (IFPY…GIWF).

It belongs to the sodium:solute symporter (SSF) (TC 2.A.21) family.

Its subcellular location is the cell inner membrane. Functionally, transports acetate. In Escherichia fergusonii (strain ATCC 35469 / DSM 13698 / CCUG 18766 / IAM 14443 / JCM 21226 / LMG 7866 / NBRC 102419 / NCTC 12128 / CDC 0568-73), this protein is Cation/acetate symporter ActP.